The primary structure comprises 468 residues: Uronate isomerase (468 aa).

The protein belongs to the metallo-dependent hydrolases superfamily. Uronate isomerase family.

It carries out the reaction D-glucuronate = D-fructuronate. The catalysed reaction is aldehydo-D-galacturonate = keto-D-tagaturonate. The protein operates within carbohydrate metabolism; pentose and glucuronate interconversion. This Phocaeicola vulgatus (strain ATCC 8482 / DSM 1447 / JCM 5826 / CCUG 4940 / NBRC 14291 / NCTC 11154) (Bacteroides vulgatus) protein is Uronate isomerase.